Here is a 260-residue protein sequence, read N- to C-terminus: DNA repair protein RecO (260 aa).

The segment at 239–260 is disordered; it reads SAGVAAARKAGGDGSDGDEGEQ.

Belongs to the RecO family.

Its function is as follows. Involved in DNA repair and RecF pathway recombination. The protein is DNA repair protein RecO of Sodalis glossinidius (strain morsitans).